A 534-amino-acid polypeptide reads, in one-letter code: Arginine--tRNA ligase (534 aa).

Positions 120-130 match the 'HIGH' region motif; sequence ANPTGFLHLGH.

This sequence belongs to the class-I aminoacyl-tRNA synthetase family. As to quaternary structure, monomer.

It is found in the cytoplasm. It carries out the reaction tRNA(Arg) + L-arginine + ATP = L-arginyl-tRNA(Arg) + AMP + diphosphate. This Mesomycoplasma hyopneumoniae (strain J / ATCC 25934 / NCTC 10110) (Mycoplasma hyopneumoniae) protein is Arginine--tRNA ligase.